Here is a 349-residue protein sequence, read N- to C-terminus: MSDFQREQRKNEHVEIAMAQSDAMHSDFDKMRFVHHSIPSINVNDIDLTSQTPDLTMAYPIYINAMTGGSEWTKNINEKLAVVARETRLAMAVGSTHAALRNPRMAETFTIARKMNPEGMIFSNVGADVPVEKALEAVELLEAQALQIHVNSPQELVMPEGNREFVTWLDNIASIVSRVSVPVIIKEVGFGMSKELMHDLQQIGVKYVDVSGKGGTNFVDIENERRANKDMDYLSSWGQSTVESLLETTAYQSEISVFASGGLRTPLDAIKSLALGAKATGMSRPFLNQVENNGIAHTVAYVESFIEHMKSIMTMLDAKNIDDLTQKQIVFSPEIMSWIEQRSLNIHRG.

Residue 9 to 10 participates in substrate binding; it reads RK. FMN contacts are provided by residues 65-67, Ser-95, and Asn-124; that span reads AMT. 95 to 97 provides a ligand contact to substrate; that stretch reads STH. Residue Gln-154 coordinates substrate. Glu-155 provides a ligand contact to Mg(2+). FMN is bound by residues Lys-186, Ser-211, Thr-216, 262–264, and 283–284; these read GLR and SR.

Belongs to the IPP isomerase type 2 family. As to quaternary structure, homooctamer. Dimer of tetramers. Requires FMN as cofactor. NADPH serves as cofactor. Mg(2+) is required as a cofactor.

It localises to the cytoplasm. It carries out the reaction isopentenyl diphosphate = dimethylallyl diphosphate. Involved in the biosynthesis of isoprenoids. Catalyzes the 1,3-allylic rearrangement of the homoallylic substrate isopentenyl (IPP) to its allylic isomer, dimethylallyl diphosphate (DMAPP). The chain is Isopentenyl-diphosphate delta-isomerase from Staphylococcus aureus (strain N315).